Consider the following 254-residue polypeptide: Sugar fermentation stimulation protein homolog (254 aa).

Belongs to the SfsA family.

This Synechococcus sp. (strain CC9605) protein is Sugar fermentation stimulation protein homolog.